The primary structure comprises 217 residues: Adenylate kinase (217 aa).

10-15 (GAGKGT) contributes to the ATP binding site. Positions 30–59 (STGDIFRANIKNNTELGAKAKEYMDQGLLV) are NMP. AMP is bound by residues Thr-31, Arg-36, 57–59 (LLV), 85–88 (GFPR), and Gln-92. Residues 126–163 (GRRACVSCGGTYHVVFTPTKKEGICDACGGELTIRDDD) form an LID region. Residue Arg-127 coordinates ATP. Zn(2+) contacts are provided by Cys-130 and Cys-133. Position 136 to 137 (136 to 137 (TY)) interacts with ATP. Cys-150 and Cys-153 together coordinate Zn(2+). Arg-160 and Arg-171 together coordinate AMP. Position 199 (Lys-199) interacts with ATP.

It belongs to the adenylate kinase family. Monomer.

The protein localises to the cytoplasm. The catalysed reaction is AMP + ATP = 2 ADP. The protein operates within purine metabolism; AMP biosynthesis via salvage pathway; AMP from ADP: step 1/1. Its function is as follows. Catalyzes the reversible transfer of the terminal phosphate group between ATP and AMP. Plays an important role in cellular energy homeostasis and in adenine nucleotide metabolism. The protein is Adenylate kinase of Lachnoclostridium phytofermentans (strain ATCC 700394 / DSM 18823 / ISDg) (Clostridium phytofermentans).